The sequence spans 459 residues: Acetyltransferase pigO (459 aa).

It belongs to the trichothecene O-acetyltransferase family.

Its pathway is secondary metabolite biosynthesis. Its function is as follows. Acetyltransferase; part of the gene cluster that mediates the biosynthesis of azaphilone pigments (MonAzPs), a complex mixture of compounds with a common azaphilone skeleton very widely used as food colorants. PigM and pigO are involved in the elimination of the omega-1 alcohol with pigM acting as an O-acetyltransferase that synthesizes the O-11 acetyl intermediate whereas pigO eliminates acetic acid to yield an intermediate with a C10(11) double bond. The first step of the pathway is performed by the nrPKS pigA that forms the hexaketide precursor from successive condensations of five malonyl-CoA units, with a simple acetyl-CoA starter unit. The role of esterase pigG is not clear, but it may play at most a supplementary role in the formation of the benzaldehyde produced by the pigA nrPKS. This very reactive benzaldehyde is intercepted by the pigC ketoreductase that to provide the first stable enzyme-free MonAzPs intermediate, 6-(4-hydroxy-2-oxopentyl)-3-methyl-2,4-dioxocyclohexane carbaldehyde, also known as M7PKS-1. The FAD-dependent monooxygenase pigN hydroxylates M7PKS-1 at C-4, which triggers the formation of the pyran ring. PigJ, pigK and pigD are involved in the acetylation of the pyran ring. PigJ and pigK form the two subunits of a dedicated fungal FAS that produces the side chain fatty acyl moiety of MonAzPs and pigD transfers the fatty acyl chain to the C-4 alcohol. PigM and pigO are involved in the elimination of the omega-1 alcohol. PigM acts as an O-acetyltransferase that synthesizes the putative O-11 acetyl intermediate whereas pigO eliminates acetic acid to yield an intermediate with a C10(11) double bond. The dehydration of the C-11 alcohol followed by the reduction of the C6(7) double bond by the NAD(P)H-dependent oxidoreductase pigE increases the electrophilicity of the C-5 ketone of the resulting acyl benzopyran. This in turn sets up the C-5 ketone for an intramolecular Knoevenagel aldol condensation with the C-20 enol of the side chain. This condensation affords the characteristic linear tricyclic carbon skeletons of the yellow pigments that serve as the common precursors for the classical yellow pigments monascin and ankaflavin, orange pigments rubopunctatin and monascorubrin, and red pigments ribropunctamine and monascorubramine. The FAD-dependent oxidoreductase pigF is especially invoved in the biosynthesis of orange and red pigments via desaturation of C6(7). This Monascus ruber (Mold) protein is Acetyltransferase pigO.